Reading from the N-terminus, the 144-residue chain is Large ribosomal subunit protein uL15 (144 aa).

A disordered region spans residues 1 to 57 (MRLNTLSPAAGSKHAPKRVGRGIGSGLGKTGGRGHKGQKSRSGGKVRPGFEGGQMPL). Gly residues predominate over residues 21 to 31 (RGIGSGLGKTG). The span at 32–44 (GRGHKGQKSRSGG) shows a compositional bias: basic residues.

Belongs to the universal ribosomal protein uL15 family. As to quaternary structure, part of the 50S ribosomal subunit.

Its function is as follows. Binds to the 23S rRNA. The sequence is that of Large ribosomal subunit protein uL15 from Vibrio vulnificus (strain CMCP6).